A 932-amino-acid chain; its full sequence is Chaperone protein ClpC3, chloroplastic (932 aa).

The segment at 1-20 (MERTLLNPPPSLRSPACRTT) is disordered. A chloroplast-targeting transit peptide spans 1–48 (MERTLLNPPPSLRSPACRTTTATRIRPSSSMATMIPTPPPMRHARLVK). Residues 99–240 (FDMFTDKAIK…RSEVIRMISD (142 aa)) form the Clp R domain. Repeat stretches follow at residues 102-167 (FTDK…AGRG) and 177-240 (FTPA…MISD). The interval 264 to 511 (LLEYGTNLTK…LVRLRNAQLP (248 aa)) is i. 309 to 316 (GEPGVGKT) contributes to the ATP binding site. The 36-residue stretch at 518–553 (EKKLKKIMAEKSEAIRSQDFEKAGALRGEEVELKSE) folds into the UVR domain. The segment at 579 to 770 (VTEADVQHIV…LIIMTSNVGS (192 aa)) is II. 653–660 (GPTGVGKS) contributes to the ATP binding site.

It belongs to the ClpA/ClpB family. ClpC subfamily.

It localises to the plastid. The protein resides in the chloroplast. In terms of biological role, molecular chaperone that may interact with a ClpP-like protease involved in degradation of denatured proteins in the chloroplast. This is Chaperone protein ClpC3, chloroplastic (CLPC3) from Oryza sativa subsp. japonica (Rice).